A 289-amino-acid chain; its full sequence is Dihydropteroate synthase (289 aa).

Positions 28 to 282 constitute a Pterin-binding domain; it reads TYVMGILNTT…DVEAMAQICK (255 aa). Asparagine 35 serves as a coordination point for Mg(2+). Residues threonine 75, aspartate 109, asparagine 128, aspartate 199, lysine 235, and 270 to 272 each bind (7,8-dihydropterin-6-yl)methyl diphosphate; that span reads RVH.

Belongs to the DHPS family. Mg(2+) serves as cofactor.

It catalyses the reaction (7,8-dihydropterin-6-yl)methyl diphosphate + 4-aminobenzoate = 7,8-dihydropteroate + diphosphate. The protein operates within cofactor biosynthesis; tetrahydrofolate biosynthesis; 7,8-dihydrofolate from 2-amino-4-hydroxy-6-hydroxymethyl-7,8-dihydropteridine diphosphate and 4-aminobenzoate: step 1/2. In terms of biological role, catalyzes the condensation of para-aminobenzoate (pABA) with 6-hydroxymethyl-7,8-dihydropterin diphosphate (DHPt-PP) to form 7,8-dihydropteroate (H2Pte), the immediate precursor of folate derivatives. This is Dihydropteroate synthase (folP) from Synechocystis sp. (strain ATCC 27184 / PCC 6803 / Kazusa).